A 371-amino-acid polypeptide reads, in one-letter code: Ferrochelatase (371 aa).

The Fe cation site is built by His218 and Glu299.

Belongs to the ferrochelatase family.

It localises to the cytoplasm. It carries out the reaction heme b + 2 H(+) = protoporphyrin IX + Fe(2+). It participates in porphyrin-containing compound metabolism; protoheme biosynthesis; protoheme from protoporphyrin-IX: step 1/1. Its function is as follows. Catalyzes the ferrous insertion into protoporphyrin IX. The chain is Ferrochelatase from Cupriavidus necator (strain ATCC 17699 / DSM 428 / KCTC 22496 / NCIMB 10442 / H16 / Stanier 337) (Ralstonia eutropha).